A 111-amino-acid chain; its full sequence is Large ribosomal subunit protein uL22 (111 aa).

The protein belongs to the universal ribosomal protein uL22 family. In terms of assembly, part of the 50S ribosomal subunit.

This protein binds specifically to 23S rRNA; its binding is stimulated by other ribosomal proteins, e.g. L4, L17, and L20. It is important during the early stages of 50S assembly. It makes multiple contacts with different domains of the 23S rRNA in the assembled 50S subunit and ribosome. Functionally, the globular domain of the protein is located near the polypeptide exit tunnel on the outside of the subunit, while an extended beta-hairpin is found that lines the wall of the exit tunnel in the center of the 70S ribosome. This Xanthomonas euvesicatoria pv. vesicatoria (strain 85-10) (Xanthomonas campestris pv. vesicatoria) protein is Large ribosomal subunit protein uL22.